A 137-amino-acid polypeptide reads, in one-letter code: Large ribosomal subunit protein uL16 (137 aa).

It belongs to the universal ribosomal protein uL16 family. In terms of assembly, part of the 50S ribosomal subunit.

Functionally, binds 23S rRNA and is also seen to make contacts with the A and possibly P site tRNAs. The sequence is that of Large ribosomal subunit protein uL16 from Rhodopseudomonas palustris (strain BisB18).